A 339-amino-acid polypeptide reads, in one-letter code: Anthranilate phosphoribosyltransferase (339 aa).

Residues glycine 81, 84 to 85 (GD), serine 89, 91 to 94 (NVSS), 109 to 117 (KHGNRALSS), and alanine 121 each bind 5-phospho-alpha-D-ribose 1-diphosphate. Anthranilate is bound at residue glycine 81. Serine 93 is a binding site for Mg(2+). Asparagine 112 contributes to the anthranilate binding site. Residue arginine 167 participates in anthranilate binding. Residues aspartate 225 and glutamate 226 each contribute to the Mg(2+) site.

It belongs to the anthranilate phosphoribosyltransferase family. In terms of assembly, homodimer. Requires Mg(2+) as cofactor.

The catalysed reaction is N-(5-phospho-beta-D-ribosyl)anthranilate + diphosphate = 5-phospho-alpha-D-ribose 1-diphosphate + anthranilate. It participates in amino-acid biosynthesis; L-tryptophan biosynthesis; L-tryptophan from chorismate: step 2/5. Its function is as follows. Catalyzes the transfer of the phosphoribosyl group of 5-phosphorylribose-1-pyrophosphate (PRPP) to anthranilate to yield N-(5'-phosphoribosyl)-anthranilate (PRA). The protein is Anthranilate phosphoribosyltransferase of Brucella suis (strain ATCC 23445 / NCTC 10510).